A 733-amino-acid chain; its full sequence is Hypermethylated in cancer 1 protein (733 aa).

Residues 47–110 (CDVIIVVQNA…IYTGRLTDSV (64 aa)) enclose the BTB domain. The tract at residues 154–315 (KYCHLRGGGS…PFRGSGGSPG (162 aa)) is mediates HDAC-dependent transcriptional repression. R159 bears the Omega-N-methylarginine mark. Residues 189-209 (YSSPAGPPPPPAAEPPSGPDA) are disordered. The segment covering 193–206 (AGPPPPPAAEPPSG) has biased composition (pro residues). Residue S237 is modified to Phosphoserine. Residues 241–247 (GLDLSKK) form an interaction with CTBP1 region. Residues 241–421 (GLDLSKKSPP…PGGHLEGYPC (181 aa)) form a disordered region. Phosphoserine is present on S248. The residue at position 333 (K333) is an N6-acetyllysine; alternate. K333 is covalently cross-linked (Glycyl lysine isopeptide (Lys-Gly) (interchain with G-Cter in SUMO); alternate). The segment covering 344-361 (ELVRDRGSPGERLEERGG) has biased composition (basic and acidic residues). The residue at position 366 (S366) is a Phosphoserine. Residues 368 to 380 (GGPPLGLVPPPRY) show a composition bias toward pro residues. 5 consecutive C2H2-type zinc fingers follow at residues 437-464 (YVCI…EEEE), 507-534 (YRCA…LTRP), 535-562 (YPCT…GLKP), 563-590 (FACD…GEKP), and 591-618 (YECQ…VGGA). S704 is subject to Phosphoserine.

It belongs to the krueppel C2H2-type zinc-finger protein family. Hic subfamily. Self-associates. Interacts with HIC2. Interacts with CTBP1 and CTBP2. Interacts with TCF7L2 and ARID1A. Interacts with MTA1 and MBD3; indicative for an association with the NuRD complex. Interacts with SIRT1. In terms of processing, acetylated on several residues, including Lys-333. Lys-333 is deacetylated by SIRT1. Post-translationally, sumoylated on Lys-333 by a PIAS family member, which enhances interaction with MTA1, positively regulates transcriptional repression activity and is enhanced by HDAC4. In terms of tissue distribution, ubiquitously expressed with highest levels in heart and lung.

The protein resides in the nucleus. Functionally, transcriptional repressor. Recognizes and binds to the consensus sequence '5-[CG]NG[CG]GGGCA[CA]CC-3'. May act as a tumor suppressor. Involved in development of head, face, limbs and ventral body wall. Involved in down-regulation of SIRT1 and thereby is involved in regulation of p53/TP53-dependent apoptotic DNA-damage responses. The specific target gene promoter association seems to be depend on corepressors, such as CTBP1 or CTBP2 and MTA1. In cooperation with MTA1 (indicative for an association with the NuRD complex) represses transcription from CCND1/cyclin-D1 and CDKN1C/p57Kip2 specifically in quiescent cells. Involved in regulation of the Wnt signaling pathway probably by association with TCF7L2 and preventing TCF7L2 and CTNNB1 association with promoters of TCF-responsive genes. Seems to repress transcription from E2F1 and ATOH1 which involves ARID1A, indicative for the participation of a distinct SWI/SNF-type chromatin-remodeling complex. Probably represses transcription from ACKR3, FGFBP1 and EFNA1. This Mus musculus (Mouse) protein is Hypermethylated in cancer 1 protein (Hic1).